Here is a 268-residue protein sequence, read N- to C-terminus: Calpain small subunit 1 (268 aa).

The residue at position 1 (methionine 1) is an N-acetylmethionine. Residue serine 6 is modified to Phosphoserine. The region spanning 96–130 (EEVRQFRKLFVQLAGDDMEVSATELMNILNKVVTR) is the EF-hand 1; atypical domain. Ca(2+) is bound by residues alanine 109, aspartate 112, glutamate 114, glutamate 119, aspartate 137, aspartate 152, aspartate 154, threonine 156, lysine 158, and glutamate 163. EF-hand domains are found at residues 139 to 172 (FGID…NNIK), 169 to 204 (NNIK…AGFH), 205 to 233 (LNEH…ISCL), and 234 to 268 (VRLD…TMYS). Lysine 179 carries the N6-acetyllysine modification. Positions 182, 184, 186, 188, 193, and 225 each coordinate Ca(2+).

Homodimer or heterodimer of a large (catalytic) and a small (regulatory) subunit. In presence of calcium, the heterodimer dissociates.

The protein resides in the cytoplasm. Its subcellular location is the cell membrane. Its function is as follows. Regulatory subunit of the calcium-regulated non-lysosomal thiol-protease which catalyzes limited proteolysis of substrates involved in cytoskeletal remodeling and signal transduction. Essential for embryonic development. The chain is Calpain small subunit 1 (Capns1) from Mus musculus (Mouse).